Here is a 342-residue protein sequence, read N- to C-terminus: Ferredoxin--NADP reductase (342 aa).

FAD-binding residues include C17, D36, Q44, Y49, V89, F124, D289, and T330.

The protein belongs to the ferredoxin--NADP reductase type 2 family. Homodimer. FAD is required as a cofactor.

It carries out the reaction 2 reduced [2Fe-2S]-[ferredoxin] + NADP(+) + H(+) = 2 oxidized [2Fe-2S]-[ferredoxin] + NADPH. This is Ferredoxin--NADP reductase from Bradyrhizobium diazoefficiens (strain JCM 10833 / BCRC 13528 / IAM 13628 / NBRC 14792 / USDA 110).